The sequence spans 428 residues: Protein clpf-1 (428 aa).

The ATP site is built by Glu16 and Arg56. The interval 99–118 (KKREEQAVSNSSKPKGPRLL) is disordered. Residue 124–129 (DVGKTT) participates in ATP binding.

Belongs to the Clp1 family. Clp1 subfamily.

The protein localises to the nucleus. Its function is as follows. Required for endonucleolytic cleavage during polyadenylation-dependent pre-mRNA 3'-end formation. This is Protein clpf-1 from Caenorhabditis briggsae.